The sequence spans 403 residues: UPF0284 protein PMT_1350 (403 aa).

Belongs to the UPF0284 family.

This chain is UPF0284 protein PMT_1350, found in Prochlorococcus marinus (strain MIT 9313).